Reading from the N-terminus, the 121-residue chain is Small ribosomal subunit protein uS13 (121 aa).

The tract at residues 99-121 (GQRTRTNARTRRGARKTVAGKKK) is disordered. The segment covering 100-121 (QRTRTNARTRRGARKTVAGKKK) has biased composition (basic residues).

The protein belongs to the universal ribosomal protein uS13 family. As to quaternary structure, part of the 30S ribosomal subunit. Forms a loose heterodimer with protein S19. Forms two bridges to the 50S subunit in the 70S ribosome.

Its function is as follows. Located at the top of the head of the 30S subunit, it contacts several helices of the 16S rRNA. In the 70S ribosome it contacts the 23S rRNA (bridge B1a) and protein L5 of the 50S subunit (bridge B1b), connecting the 2 subunits; these bridges are implicated in subunit movement. Contacts the tRNAs in the A and P-sites. The polypeptide is Small ribosomal subunit protein uS13 (Synechococcus sp. (strain RCC307)).